An 84-amino-acid polypeptide reads, in one-letter code: Alpha-like toxin BmK M1 (84 aa).

The signal sequence occupies residues 1–19 (MNYLVMISFALLLMTGVES). One can recognise an LCN-type CS-alpha/beta domain in the interval 21-83 (RDAYIAKPHN…VPIRVPGKCH (63 aa)). 4 disulfides stabilise this stretch: C31–C82, C35–C55, C41–C65, and C45–C67. R84 is a propeptide (removed by a carboxypeptidase).

Belongs to the long (4 C-C) scorpion toxin superfamily. Sodium channel inhibitor family. Alpha subfamily. As to expression, expressed by the venom gland.

It localises to the secreted. Alpha toxins bind voltage-independently at site-3 of sodium channels (Nav) and inhibit the inactivation of the activated channels thereby blocking neuronal transmission. This toxin is active against both mammals and insects, and is classified as an alpha-like toxin. It is active on Nav1.2/SCN2A (EC(50)=139-252 nM), Nav1.3/SCN3A (EC(50)=565 nM), Nav1.4/SCN4A and Nav1.5/SCN5A (EC(50)=195-500 nM), Nav1.6/SCN8A (EC(50)=214 nM), and drosophila DmNav1 (EC(50)=30 nM). In mNav1.6/SCN8A, the toxin induces a large increase in both transient and persistent currents, which correlates with a prominent reduction in the fast component of inactivating current. In rNav1.2/SCN2A and rNav1.3/SCN3A, toxin-increased currents is much smaller. Moreover, the toxin only accelerates the slow inactivation development and delay recovery of mNav1.6/SCN8A through binding to the channel in the open state. Is 6-fold more toxic than BmK-M2. In vivo, intrahippocampal injection into rat induces epileptiform responses. In addition, intraplantar injection into rat induces spontaneous nociception and hyperalgesia. The sequence is that of Alpha-like toxin BmK M1 from Olivierus martensii (Manchurian scorpion).